The following is a 671-amino-acid chain: Autophagy-related protein 22-2 (671 aa).

Polar residues-rich tracts occupy residues 1 to 10 (MVPRNFSESQ) and 19 to 34 (PSNSTKISYRSHSSSF). The interval 1-67 (MVPRNFSESQ…RDVPAQYAGE (67 aa)) is disordered. 2 N-linked (GlcNAc...) asparagine glycosylation sites follow: asparagine 5 and asparagine 21. Basic and acidic residues predominate over residues 39 to 60 (ERSSSADHDSMGPDIGSAHRDV). 4 helical membrane passes run 83–103 (YGFAAEVFVICGIGSFIPITL), 155–175 (SFAMYSFSLSVLFQAILVVSI), 188–208 (LLLFFAFAGSITTMLFLTVVP), and 212–232 (LLGALWAIISNTCFGASFVLL). Positions 251-271 (PDFSPEFRPSSVDESPPEHSL) are disordered. The chain crosses the membrane as a helical span at residues 324-344 (IGIGYSAGLFLQCVSIVIIWL). Asparagine 346 is a glycosylation site (N-linked (GlcNAc...) asparagine). Transmembrane regions (helical) follow at residues 354 to 374 (LVLFFIGLWWFLFTIPAALWL), 422 to 442 (FFLAAWFLLSDAIATVSGTAV), 457 to 477 (GLINVIATTAGVLGAFSWAAI), 491 to 511 (ACICIFEMIPLYGLLGFLPIV), 523 to 543 (WEMYPLGFVYGFVLGGLSSYC), 560 to 582 (YALYAITDKGSSVFGPAIVGAIV), and 591 to 611 (AFWFLAVLVGLPAPLIYFVNV). The disordered stretch occupies residues 634–671 (ESAGEGSRGSSIDHESGQNEGLIYPRVGENAGRGRNDI).

It belongs to the ATG22 family.

It is found in the vacuole membrane. Functionally, vacuolar effluxer which mediate the efflux of amino acids resulting from autophagic degradation. The release of autophagic amino acids allows the maintenance of protein synthesis and viability during nitrogen starvation. This chain is Autophagy-related protein 22-2 (atg22-2), found in Sclerotinia sclerotiorum (strain ATCC 18683 / 1980 / Ss-1) (White mold).